The primary structure comprises 193 residues: Ribonuclease HII (193 aa).

An RNase H type-2 domain is found at 1 to 193; it reads MTLGIDEAGR…SFALKNNWFS (193 aa). A divalent metal cation is bound by residues aspartate 6, glutamate 7, and aspartate 103.

Belongs to the RNase HII family. It depends on Mn(2+) as a cofactor. Mg(2+) is required as a cofactor.

The protein localises to the cytoplasm. It carries out the reaction Endonucleolytic cleavage to 5'-phosphomonoester.. Endonuclease that specifically degrades the RNA of RNA-DNA hybrids. In Helicobacter acinonychis (strain Sheeba), this protein is Ribonuclease HII.